The following is a 397-amino-acid chain: Riboflavin biosynthesis protein RibBA (397 aa).

Residues 1–199 (MFHRIEEALE…IEDLIAYRRH (199 aa)) form a DHBP synthase region. D-ribulose 5-phosphate-binding positions include 26–27 (RE), aspartate 31, 138–142 (RAGHT), and glutamate 162. Residue glutamate 27 participates in Mg(2+) binding. Mg(2+) is bound at residue histidine 141. A GTP cyclohydrolase II region spans residues 200-397 (HETFVTKEVE…VTKLGHLLNL (198 aa)). GTP is bound at residue 250–254 (RVHSE). Residues cysteine 255, cysteine 266, and cysteine 268 each contribute to the Zn(2+) site. Residues glutamine 271, 293–295 (EGR), and threonine 315 contribute to the GTP site. Aspartate 327 (proton acceptor; for GTP cyclohydrolase activity) is an active-site residue. Arginine 329 serves as the catalytic Nucleophile; for GTP cyclohydrolase activity. Positions 350 and 355 each coordinate GTP.

The protein in the N-terminal section; belongs to the DHBP synthase family. In the C-terminal section; belongs to the GTP cyclohydrolase II family. The cofactor is Mg(2+). It depends on Mn(2+) as a cofactor. Requires Zn(2+) as cofactor.

It catalyses the reaction D-ribulose 5-phosphate = (2S)-2-hydroxy-3-oxobutyl phosphate + formate + H(+). The catalysed reaction is GTP + 4 H2O = 2,5-diamino-6-hydroxy-4-(5-phosphoribosylamino)-pyrimidine + formate + 2 phosphate + 3 H(+). It functions in the pathway cofactor biosynthesis; riboflavin biosynthesis; 2-hydroxy-3-oxobutyl phosphate from D-ribulose 5-phosphate: step 1/1. It participates in cofactor biosynthesis; riboflavin biosynthesis; 5-amino-6-(D-ribitylamino)uracil from GTP: step 1/4. In terms of biological role, catalyzes the conversion of D-ribulose 5-phosphate to formate and 3,4-dihydroxy-2-butanone 4-phosphate. Functionally, catalyzes the conversion of GTP to 2,5-diamino-6-ribosylamino-4(3H)-pyrimidinone 5'-phosphate (DARP), formate and pyrophosphate. The protein is Riboflavin biosynthesis protein RibBA of Bacillus cytotoxicus (strain DSM 22905 / CIP 110041 / 391-98 / NVH 391-98).